A 468-amino-acid polypeptide reads, in one-letter code: 6-phospho-beta-galactosidase 2 (468 aa).

The D-galactose 6-phosphate site is built by Q19, H116, N159, E160, and N297. The Proton donor role is filled by E160. The Nucleophile role is filled by E375. Residues S428, W429, K435, and Y437 each contribute to the D-galactose 6-phosphate site.

The protein belongs to the glycosyl hydrolase 1 family.

It carries out the reaction a 6-phospho-beta-D-galactoside + H2O = D-galactose 6-phosphate + an alcohol. It functions in the pathway carbohydrate metabolism; lactose degradation; D-galactose 6-phosphate and beta-D-glucose from lactose 6-phosphate: step 1/1. This Streptococcus pneumoniae (strain ATCC BAA-255 / R6) protein is 6-phospho-beta-galactosidase 2.